The chain runs to 658 residues: Threonine--tRNA ligase (658 aa).

A TGS domain is found at 1–64 (MSFSISLSFP…EQSGQVEIIT (64 aa)). The interval 246–549 (DHRRLGREMD…LIENFAGHMP (304 aa)) is catalytic. 3 residues coordinate Zn(2+): Cys343, His394, and His526.

Belongs to the class-II aminoacyl-tRNA synthetase family. Homodimer. Requires Zn(2+) as cofactor.

Its subcellular location is the cytoplasm. It carries out the reaction tRNA(Thr) + L-threonine + ATP = L-threonyl-tRNA(Thr) + AMP + diphosphate + H(+). Functionally, catalyzes the attachment of threonine to tRNA(Thr) in a two-step reaction: L-threonine is first activated by ATP to form Thr-AMP and then transferred to the acceptor end of tRNA(Thr). Also edits incorrectly charged L-seryl-tRNA(Thr). In Bartonella bacilliformis (strain ATCC 35685 / KC583 / Herrer 020/F12,63), this protein is Threonine--tRNA ligase.